The sequence spans 345 residues: Ryncolin-1 (345 aa).

The first 19 residues, 1–19 (MKPWAAFHLIFLVASSLEG), serve as a signal peptide directing secretion. The tract at residues 48–118 (ILQSQPGIPG…DKGDKGEDCN (71 aa)) is disordered. The Collagen-like domain occupies 57–114 (GIPGVPGTNGSEGLKGDPGPQGPPGIRGPDGIRGEAGPKGDKGDQGDKGDKGDKGDKG). Over residues 86–116 (DGIRGEAGPKGDKGDQGDKGDKGDKGDKGED) the composition is skewed to basic and acidic residues. The Fibrinogen C-terminal domain maps to 121 to 339 (GCLPTEVRNC…YADMKIRPQQ (219 aa)). 2 disulfides stabilise this stretch: Cys-130-Cys-158 and Cys-282-Cys-295.

This sequence belongs to the ficolin lectin family. Veficolin subfamily. Post-translationally, hydroxylated, possibly at Pro-80. Expressed by the venom duct.

The protein localises to the secreted. Functionally, initiates complement activation and/or interferes in platelet aggregation and/or blood coagulation. This chain is Ryncolin-1, found in Cerberus rynchops (Dog-faced water snake).